The following is a 234-amino-acid chain: 2,3-bisphosphoglycerate-dependent phosphoglycerate mutase (234 aa).

Substrate is bound by residues 10–17, 23–24, Arg62, 89–92, Lys100, 116–117, and 186–187; these read RHGSSIWN, TG, ERHY, RR, and GN. His11 functions as the Tele-phosphohistidine intermediate in the catalytic mechanism. The Proton donor/acceptor role is filled by Glu89.

This sequence belongs to the phosphoglycerate mutase family. BPG-dependent PGAM subfamily. Homodimer.

It catalyses the reaction (2R)-2-phosphoglycerate = (2R)-3-phosphoglycerate. The protein operates within carbohydrate degradation; glycolysis; pyruvate from D-glyceraldehyde 3-phosphate: step 3/5. Catalyzes the interconversion of 2-phosphoglycerate and 3-phosphoglycerate. The protein is 2,3-bisphosphoglycerate-dependent phosphoglycerate mutase of Wigglesworthia glossinidia brevipalpis.